Reading from the N-terminus, the 279-residue chain is Thiazole synthase (279 aa).

K116 (schiff-base intermediate with DXP) is an active-site residue. Residues G177, 203–204 (AG), and 225–226 (NS) contribute to the 1-deoxy-D-xylulose 5-phosphate site.

The protein belongs to the ThiG family. Homotetramer. Forms heterodimers with either ThiH or ThiS.

The protein localises to the cytoplasm. It catalyses the reaction [ThiS sulfur-carrier protein]-C-terminal-Gly-aminoethanethioate + 2-iminoacetate + 1-deoxy-D-xylulose 5-phosphate = [ThiS sulfur-carrier protein]-C-terminal Gly-Gly + 2-[(2R,5Z)-2-carboxy-4-methylthiazol-5(2H)-ylidene]ethyl phosphate + 2 H2O + H(+). It participates in cofactor biosynthesis; thiamine diphosphate biosynthesis. Functionally, catalyzes the rearrangement of 1-deoxy-D-xylulose 5-phosphate (DXP) to produce the thiazole phosphate moiety of thiamine. Sulfur is provided by the thiocarboxylate moiety of the carrier protein ThiS. In vitro, sulfur can be provided by H(2)S. This Trichodesmium erythraeum (strain IMS101) protein is Thiazole synthase.